The primary structure comprises 558 residues: Membrane protein insertase YidC (558 aa).

5 consecutive transmembrane segments (helical) span residues 3-23 (IKRTVLWVIFFMSAVMLFDNW), 364-384 (FVGNWGWAIVLLTLLIKAVFF), 438-458 (LPVVIQIPVFISLYWVLLASV), 477-497 (PYFILPVLMAVSMFVQTKLNP), and 508-528 (MMFMPIAFSVMFFFFPAGLVL).

It belongs to the OXA1/ALB3/YidC family. Type 1 subfamily. As to quaternary structure, interacts with the Sec translocase complex via SecD. Specifically interacts with transmembrane segments of nascent integral membrane proteins during membrane integration.

It is found in the cell inner membrane. Required for the insertion and/or proper folding and/or complex formation of integral membrane proteins into the membrane. Involved in integration of membrane proteins that insert both dependently and independently of the Sec translocase complex, as well as at least some lipoproteins. Aids folding of multispanning membrane proteins. In Burkholderia pseudomallei (strain 668), this protein is Membrane protein insertase YidC.